The following is a 602-amino-acid chain: DEAD-box ATP-dependent RNA helicase 52A (602 aa).

Residues 9–31 form a disordered region; it reads KSVEAGGEPGGGGGGAWSTVSRS. A compositionally biased stretch (gly residues) spans 15–24; the sequence is GEPGGGGGGA. The Q motif signature appears at 84 to 112; the sequence is DGFEAAGLVEAVLRNVARCGYESPTPVQR. Residues 115 to 305 enclose the Helicase ATP-binding domain; it reads MPIALAGRDL…SDFLSNYIFI (191 aa). 128-135 is a binding site for ATP; the sequence is AQTGSGKT. Residues 249–252 carry the DEAD box motif; that stretch reads DEAD. The 158-residue stretch at 328–485 folds into the Helicase C-terminal domain; it reads EKRGYLLDLL…DVPDWLVQYA (158 aa). Disordered regions lie at residues 492–521 and 552–602; these read GSSY…SGGG and RGGG…SGWD. Residues 552-574 show a composition bias toward gly residues; sequence RGGGYSRGGRGGYSGGGGGGGGD.

Belongs to the DEAD box helicase family. DDX3/DED1 subfamily.

It carries out the reaction ATP + H2O = ADP + phosphate + H(+). This chain is DEAD-box ATP-dependent RNA helicase 52A, found in Oryza sativa subsp. japonica (Rice).